Consider the following 404-residue polypeptide: Succinyl-diaminopimelate desuccinylase (404 aa).

Zn(2+) is bound at residue His-80. Residue Asp-82 is part of the active site. Zn(2+) is bound at residue Asp-113. Glu-147 functions as the Proton acceptor in the catalytic mechanism. The Zn(2+) site is built by Glu-148, Glu-176, and His-373.

The protein belongs to the peptidase M20A family. DapE subfamily. In terms of assembly, homodimer. It depends on Zn(2+) as a cofactor. The cofactor is Co(2+).

The catalysed reaction is N-succinyl-(2S,6S)-2,6-diaminopimelate + H2O = (2S,6S)-2,6-diaminopimelate + succinate. Its pathway is amino-acid biosynthesis; L-lysine biosynthesis via DAP pathway; LL-2,6-diaminopimelate from (S)-tetrahydrodipicolinate (succinylase route): step 3/3. Functionally, catalyzes the hydrolysis of N-succinyl-L,L-diaminopimelic acid (SDAP), forming succinate and LL-2,6-diaminopimelate (DAP), an intermediate involved in the bacterial biosynthesis of lysine and meso-diaminopimelic acid, an essential component of bacterial cell walls. The chain is Succinyl-diaminopimelate desuccinylase from Allorhizobium ampelinum (strain ATCC BAA-846 / DSM 112012 / S4) (Agrobacterium vitis (strain S4)).